Reading from the N-terminus, the 196-residue chain is UMP-CMP kinase (196 aa).

Residue 13-18 coordinates ATP; sequence GAGKGT. The segment at 33–63 is NMP; sequence SAGDLLRDERKRPGSQYGELIENYIKEGEIV. A ribonucleoside 5'-phosphate-binding positions include R39, 61 to 63, and 93 to 96; these read EIV and GFPR. N100 contacts CMP. The tract at residues 133–143 is LID; sequence ERGKSSGRSDD. Residue R134 coordinates ATP. R140 and R151 together coordinate a ribonucleoside 5'-phosphate. K179 contributes to the ATP binding site.

This sequence belongs to the adenylate kinase family. UMP-CMP kinase subfamily. In terms of assembly, monomer. Requires Mg(2+) as cofactor.

It is found in the nucleus. Its subcellular location is the cytoplasm. It catalyses the reaction CMP + ATP = CDP + ADP. It carries out the reaction dCMP + ATP = dCDP + ADP. The enzyme catalyses UMP + ATP = UDP + ADP. The catalysed reaction is a 2'-deoxyribonucleoside 5'-diphosphate + ATP = a 2'-deoxyribonucleoside 5'-triphosphate + ADP. It catalyses the reaction a ribonucleoside 5'-diphosphate + ATP = a ribonucleoside 5'-triphosphate + ADP. In terms of biological role, catalyzes the phosphorylation of pyrimidine nucleoside monophosphates at the expense of ATP. Plays an important role in de novo pyrimidine nucleotide biosynthesis. Has preference for UMP and CMP as phosphate acceptors. Also displays broad nucleoside diphosphate kinase activity. The chain is UMP-CMP kinase (CMPK) from Gallus gallus (Chicken).